A 178-amino-acid polypeptide reads, in one-letter code: MSNKESNVALQTLRVTKDMKDFLSHRIVGEPPANIKIEYQKIHRYRTCVCPSTGHISELCPSGDLILSLGAHRNVIAAATVYDVVKNKIKSTTSKAGTSSTLSSLGLSGFQKPKIGSKNKKTMFSKQNNSTNESDESGGEEGSSLNDLPKSDLINAIMELASQGRNNSKGKGKRGGKR.

Residues 113–178 (PKIGSKNKKT…KGKGKRGGKR (66 aa)) form a disordered region. Positions 168 to 178 (SKGKGKRGGKR) are enriched in basic residues.

The protein belongs to the phytoreovirus RNA-binding protein family.

The protein localises to the host cytoplasm. In terms of biological role, constituent of viral factories. Binds to ssRNA and dsRNA. The chain is RNA-binding protein from Wound tumor virus (WTV).